The primary structure comprises 432 residues: Adenylosuccinate synthetase (432 aa).

GTP is bound by residues 13–19 and 41–43; these read GDEGKGK and GHT. Residue aspartate 14 is the Proton acceptor of the active site. The Mg(2+) site is built by aspartate 14 and glycine 41. IMP-binding positions include 14–17, 39–42, threonine 130, arginine 144, glutamine 225, threonine 240, and arginine 304; these read DEGK and NAGH. The active-site Proton donor is histidine 42. Residue 300-306 participates in substrate binding; it reads AVTGRPR. GTP is bound by residues arginine 306, 332-334, and 415-417; these read KLD and STG.

It belongs to the adenylosuccinate synthetase family. As to quaternary structure, homodimer. It depends on Mg(2+) as a cofactor.

Its subcellular location is the cytoplasm. The catalysed reaction is IMP + L-aspartate + GTP = N(6)-(1,2-dicarboxyethyl)-AMP + GDP + phosphate + 2 H(+). It functions in the pathway purine metabolism; AMP biosynthesis via de novo pathway; AMP from IMP: step 1/2. In terms of biological role, plays an important role in the de novo pathway of purine nucleotide biosynthesis. Catalyzes the first committed step in the biosynthesis of AMP from IMP. The sequence is that of Adenylosuccinate synthetase from Haemophilus ducreyi (strain 35000HP / ATCC 700724).